The sequence spans 341 residues: Holliday junction branch migration complex subunit RuvB (341 aa).

A large ATPase domain (RuvB-L) region spans residues M1–Y180. 9 residues coordinate ATP: L19, R20, G61, K64, T65, T66, R170, Y180, and R217. Mg(2+) is bound at residue T65. Positions N181 to G251 are small ATPAse domain (RuvB-S). Residues D254–F341 form a head domain (RuvB-H) region. Residues R309 and R314 each coordinate DNA.

Belongs to the RuvB family. As to quaternary structure, homohexamer. Forms an RuvA(8)-RuvB(12)-Holliday junction (HJ) complex. HJ DNA is sandwiched between 2 RuvA tetramers; dsDNA enters through RuvA and exits via RuvB. An RuvB hexamer assembles on each DNA strand where it exits the tetramer. Each RuvB hexamer is contacted by two RuvA subunits (via domain III) on 2 adjacent RuvB subunits; this complex drives branch migration. In the full resolvosome a probable DNA-RuvA(4)-RuvB(12)-RuvC(2) complex forms which resolves the HJ.

It is found in the cytoplasm. It catalyses the reaction ATP + H2O = ADP + phosphate + H(+). Functionally, the RuvA-RuvB-RuvC complex processes Holliday junction (HJ) DNA during genetic recombination and DNA repair, while the RuvA-RuvB complex plays an important role in the rescue of blocked DNA replication forks via replication fork reversal (RFR). RuvA specifically binds to HJ cruciform DNA, conferring on it an open structure. The RuvB hexamer acts as an ATP-dependent pump, pulling dsDNA into and through the RuvAB complex. RuvB forms 2 homohexamers on either side of HJ DNA bound by 1 or 2 RuvA tetramers; 4 subunits per hexamer contact DNA at a time. Coordinated motions by a converter formed by DNA-disengaged RuvB subunits stimulates ATP hydrolysis and nucleotide exchange. Immobilization of the converter enables RuvB to convert the ATP-contained energy into a lever motion, pulling 2 nucleotides of DNA out of the RuvA tetramer per ATP hydrolyzed, thus driving DNA branch migration. The RuvB motors rotate together with the DNA substrate, which together with the progressing nucleotide cycle form the mechanistic basis for DNA recombination by continuous HJ branch migration. Branch migration allows RuvC to scan DNA until it finds its consensus sequence, where it cleaves and resolves cruciform DNA. The protein is Holliday junction branch migration complex subunit RuvB of Leptospira borgpetersenii serovar Hardjo-bovis (strain JB197).